Consider the following 448-residue polypeptide: Vitamin D3 receptor (448 aa).

Positions P41–T116 form a DNA-binding region, nuclear receptor. C44, C47, C61, C64, C80, C86, C96, and C99 together coordinate Zn(2+). 2 NR C4-type zinc fingers span residues C44–C64 and C80–C104. The tract at residues D117 to E146 is hinge. The 298-residue stretch at E147–G444 folds into the NR LBD domain. S258 is a calcitriol binding site. An interaction with coactivator LXXLL motif region spans residues K267–K285. 4 residues coordinate calcitriol: R295, S299, H326, and H418. The 9aaTAD motif lies at P437–N445.

Belongs to the nuclear hormone receptor family. NR1 subfamily. In terms of assembly, homodimer in the absence of bound vitamin D3. Heterodimer with RXRA after vitamin D3 binding.

The protein localises to the nucleus. It localises to the cytoplasm. In terms of biological role, nuclear receptor for calcitriol, the active form of vitamin D3 which mediates the action of this vitamin on cells. Enters the nucleus upon vitamin D3 binding where it forms heterodimers with the retinoid X receptor/RXR. The VDR-RXR heterodimers bind to specific response elements on DNA and activate the transcription of vitamin D3-responsive target genes. Plays a central role in calcium homeostasis. Also functions as a receptor for the secondary bile acid lithocholic acid (LCA) and its metabolites. The chain is Vitamin D3 receptor (VDR) from Coturnix japonica (Japanese quail).